The sequence spans 963 residues: VPS35 endosomal protein-sorting factor-like (963 aa).

The interval 43-112 (SKTKKVSRKG…DKDENSFVGP (70 aa)) is disordered. Residues 51-72 (KGSTSSTSSSSSSSVIDPLSSV) are compositionally biased toward low complexity. Position 265 is a phosphoserine (Ser265). Residues 699–719 (AFVRACVAYCFITIPSLVGIF) form a helical membrane-spanning segment.

The protein belongs to the VPS35L family. As to quaternary structure, component of the heterotrimeric retriever complex formed by VPS26C, VPS29 and VPS35L. Interacts with VPS29. Interacts with COMMD1, CCDC93 and CCDC22; associates with the CCC (COMMD/CCDC22/CCDC93) complex which contains at least COMMD1 (and possibly other COMM domain-containing proteins), CCDC22 and CCDC93. Interacts with WASHC1, WASHC2A and WASHC2C. Interacts with SNX17 and SNX31.

The protein resides in the membrane. It is found in the endosome. In terms of biological role, acts as a component of the retriever complex. The retriever complex is a heterotrimeric complex related to retromer cargo-selective complex (CSC) and essential for retromer-independent retrieval and recycling of numerous cargos such as integrin alpha-5/beta-1 (ITGA5:ITGB1). The recruitment of the retriever complex to the endosomal membrane involves CCC and WASH complexes. In the endosomes, drives the retrieval and recycling of NxxY-motif-containing cargo proteins by coupling to SNX17, a cargo essential for the homeostatic maintenance of numerous cell surface proteins associated with processes that include cell migration, cell adhesion, nutrient supply and cell signaling. Involved in copper-dependent ATP7A trafficking between the trans-Golgi network and vesicles in the cell periphery; the function is proposed to depend on its association with the CCC complex and cooperation with the WASH complex on early endosomes. Seems not to be required for CCC complex stability. This Mus musculus (Mouse) protein is VPS35 endosomal protein-sorting factor-like.